A 512-amino-acid polypeptide reads, in one-letter code: MTKKFVGLTILDGLGLTDQKENNAFHLAKTPYLDYLLKNFPNTTLKASGEEVGLPQGQMGNSEVGHLNLGAGRVVYQSLTQINKAIRDKSFFTNKQFLQAIEHVKKNNSKMHLLGLISDGGIHSHLDHFKALFDLLKENNLANNTFLHAFTDGRDTSPHSGINYIKDLLDYGFNIASVVGRYYALDRDNNWNRINLVYNMLTSKQAPVIDLPLEDTIQNFYNQGITDEFITPFITNPNGLINDNDAVIFVNFRPDRAMRLATALSNPCATNAFCSEGKTNFCGTKLLNNLFLVTMTKYSAQVKSVVAFEKITLKNIYGEVIANLGMHQLRIAETEKYPHVTFFFDGGKELQLKNADRILIPSPKVKTYDLKPEMSALEITTHAKTAILSGKYDTLILNFANPDMVGHTGFLDATIKAIQTVDSCLKEVLNAIFAVKGKACIVADHGNAEQMTDNQGNPHTAHTTNLVPFIVTDKNVVLKPGSLCDVAPTMLDLLEIKKPQEMTGNSLIKKLV.

Mn(2+) contacts are provided by Asp12 and Ser62. Catalysis depends on Ser62, which acts as the Phosphoserine intermediate. Substrate-binding positions include His123, 154-155 (RD), Arg181, Arg187, 253-256 (RPDR), and Lys336. Mn(2+) contacts are provided by Asp403, His407, Asp444, His445, and His462.

It belongs to the BPG-independent phosphoglycerate mutase family. Monomer. Requires Mn(2+) as cofactor.

The enzyme catalyses (2R)-2-phosphoglycerate = (2R)-3-phosphoglycerate. It participates in carbohydrate degradation; glycolysis; pyruvate from D-glyceraldehyde 3-phosphate: step 3/5. Its function is as follows. Catalyzes the interconversion of 2-phosphoglycerate and 3-phosphoglycerate. In Onion yellows phytoplasma (strain OY-M), this protein is 2,3-bisphosphoglycerate-independent phosphoglycerate mutase.